The sequence spans 152 residues: MNTELDLQIACEFDNLPSEAQFALWADKALSQYRDESELTIVISDEAQSQQLNNDYRGKNKPTNVLSFEFEAPPGIDIPLVGDLVICPAIVLAEAIEQEKSFHDHFAHMVIHGCLHLLGFDHIKSEDAFEMESIEKQLLAELNIADPYRDEI.

Residues His112, His116, and His122 each contribute to the Zn(2+) site.

The protein belongs to the endoribonuclease YbeY family. Zn(2+) is required as a cofactor.

The protein resides in the cytoplasm. Its function is as follows. Single strand-specific metallo-endoribonuclease involved in late-stage 70S ribosome quality control and in maturation of the 3' terminus of the 16S rRNA. The protein is Endoribonuclease YbeY of Pseudoalteromonas translucida (strain TAC 125).